The primary structure comprises 617 residues: Erythritol-mannosyl-transferase 1 (617 aa).

2 disordered regions span residues 365-396 (RNPGSPGFTSPLNSPTAVATPKWDEKRPIDSR) and 567-617 (RQRK…VTNP). Over residues 371-381 (GFTSPLNSPTA) the composition is skewed to polar residues. The span at 386 to 396 (KWDEKRPIDSR) shows a compositional bias: basic and acidic residues. Over residues 578-603 (TAKTSLSVDTTEVATPTFTDTETSLS) the composition is skewed to polar residues.

It belongs to the UDP-glycosyltransferase family.

The protein operates within secondary metabolite biosynthesis. In terms of biological role, glycosyltransferase; part of the gene cluster that mediates the biosynthesis of mannosylerythritol lipids (MELs), surface-active substances that enhance the availability of water-insoluble substrates. Depending on the number of acetyl groups, mannosylerythritol lipids can be differentiated into MEL A (fully acetylated), MEL B and MEL C (monoacetylated at R-6 and R-4, respectively), and the fully deacetylated MEL D. The first step in the pathway is the generation of mannosylerythritol by the glycosyltransferase EMT1 which catalyzes the transfer of GDP-mannose to the C-4 atom of meso-erythritol. This reaction has to be stereospecific, since only mannosyl-D-erythritol is generated. The produced disaccharide is subsequently acylated with fatty acids of various lengths by the acyltransferases MAC1 and MAC2 at positions C-2 and C-3, repectively. The existence of MEL derivatives which carry an acetyl group at C-2 implies that at least MAC1 also accepts acetyl-CoA as a donor. The final step of MEL biosynthesis is the acetylation of the fully acylated mannosylerythritol lipids catalyzed by the acetyl-CoA-dependent acetyltransferase MAT1. MAT1 displays a relaxed regioselectivity and is able to transfer acetylgroups to both positions C-4 and C-6 of the mannosyl moiety. This chain is Erythritol-mannosyl-transferase 1, found in Pseudozyma antarctica (strain T-34) (Yeast).